We begin with the raw amino-acid sequence, 258 residues long: Type III pantothenate kinase (258 aa).

Residue 6–13 (DVGNTQIF) coordinates ATP. 107-110 (GADR) contributes to the substrate binding site. Residue Asp109 is the Proton acceptor of the active site. A K(+)-binding site is contributed by Asp130. Thr133 is a binding site for ATP. Thr185 serves as a coordination point for substrate.

Belongs to the type III pantothenate kinase family. As to quaternary structure, homodimer. Requires NH4(+) as cofactor. K(+) is required as a cofactor.

It is found in the cytoplasm. The enzyme catalyses (R)-pantothenate + ATP = (R)-4'-phosphopantothenate + ADP + H(+). It functions in the pathway cofactor biosynthesis; coenzyme A biosynthesis; CoA from (R)-pantothenate: step 1/5. Functionally, catalyzes the phosphorylation of pantothenate (Pan), the first step in CoA biosynthesis. The sequence is that of Type III pantothenate kinase from Elusimicrobium minutum (strain Pei191).